The sequence spans 287 residues: POU domain class 2-associating factor 2 (287 aa).

Residues 10–32 (KRVYQGVRVKHTVKDLLAEKRSR) enclose the OCA domain. 3 disordered regions span residues 24–51 (DLLA…PPFI), 161–199 (TVPD…TQHR), and 247–279 (PKVG…MAWG). 2 stretches are compositionally biased toward polar residues: residues 33–49 (QTSN…SQPP) and 180–199 (LPPS…TQHR).

It belongs to the POU2AF family. As to quaternary structure, interacts with POU2F3 (via the POU domain) in a DNA-dependent manner; this interaction recruits POU2AF2 to chromatin and increases POU2F3 transactivation activity. Expressed in tuft cells of the small intestine, trachea, thymus, and colon.

The protein resides in the cytoplasm. Its subcellular location is the cytosol. It localises to the nucleus. Functionally, transcriptional coactivator of POU2F3. This complex drives the development of tuft cells, a rare chemosensory cells that coordinate immune and neural functions within mucosal epithelial tissues. The chain is POU domain class 2-associating factor 2 from Mus musculus (Mouse).